The primary structure comprises 214 residues: Shikimate kinase (214 aa).

35-40 (GAGKST) is an ATP binding site. Mg(2+) is bound at residue S39. Positions 57, 81, and 103 each coordinate substrate. R141 serves as a coordination point for ATP. Position 160 (R160) interacts with substrate.

The protein belongs to the shikimate kinase family. As to quaternary structure, monomer. The cofactor is Mg(2+).

The protein localises to the cytoplasm. The catalysed reaction is shikimate + ATP = 3-phosphoshikimate + ADP + H(+). It functions in the pathway metabolic intermediate biosynthesis; chorismate biosynthesis; chorismate from D-erythrose 4-phosphate and phosphoenolpyruvate: step 5/7. Its function is as follows. Catalyzes the specific phosphorylation of the 3-hydroxyl group of shikimic acid using ATP as a cosubstrate. The polypeptide is Shikimate kinase (Nitrobacter winogradskyi (strain ATCC 25391 / DSM 10237 / CIP 104748 / NCIMB 11846 / Nb-255)).